The following is a 535-amino-acid chain: T-complex protein 1 subunit epsilon (535 aa).

This sequence belongs to the TCP-1 chaperonin family. As to quaternary structure, heterooligomeric complex of about 850 to 900 kDa that forms two stacked rings, 12 to 16 nm in diameter.

It is found in the cytoplasm. Molecular chaperone; assists the folding of proteins upon ATP hydrolysis. Known to play a role, in vitro, in the folding of actin and tubulin. The sequence is that of T-complex protein 1 subunit epsilon from Avena sativa (Oat).